The primary structure comprises 390 residues: LL-diaminopimelate aminotransferase 2 (390 aa).

Substrate-binding residues include tyrosine 13 and glycine 38. Pyridoxal 5'-phosphate is bound by residues tyrosine 67, 102–103, tyrosine 127, asparagine 177, tyrosine 208, and 236–238; these read SK and SLS. Lysine 103, tyrosine 127, and asparagine 177 together coordinate substrate. Lysine 239 is modified (N6-(pyridoxal phosphate)lysine). Residue arginine 247 participates in pyridoxal 5'-phosphate binding. Substrate is bound at residue arginine 365.

The protein belongs to the class-I pyridoxal-phosphate-dependent aminotransferase family. LL-diaminopimelate aminotransferase subfamily. In terms of assembly, homodimer. Pyridoxal 5'-phosphate is required as a cofactor.

The catalysed reaction is (2S,6S)-2,6-diaminopimelate + 2-oxoglutarate = (S)-2,3,4,5-tetrahydrodipicolinate + L-glutamate + H2O + H(+). It participates in amino-acid biosynthesis; L-lysine biosynthesis via DAP pathway; LL-2,6-diaminopimelate from (S)-tetrahydrodipicolinate (aminotransferase route): step 1/1. Involved in the synthesis of meso-diaminopimelate (m-DAP or DL-DAP), required for both lysine and peptidoglycan biosynthesis. Catalyzes the direct conversion of tetrahydrodipicolinate to LL-diaminopimelate. In Trichormus variabilis (strain ATCC 29413 / PCC 7937) (Anabaena variabilis), this protein is LL-diaminopimelate aminotransferase 2.